Reading from the N-terminus, the 572-residue chain is Mitochondrial distribution and morphology protein 34 (572 aa).

The SMP-LTD domain maps to 1 to 195 (MAFNFNWSPL…LPAIIHRLSL (195 aa)). Disordered regions lie at residues 208-236 (LQTQ…VDAL), 296-405 (PSDQ…CSAP), 455-518 (RDTA…PFIN), and 551-572 (NACG…AYGH). Residues 296–347 (PSDQTDASGGVTSPFSPVLSRTQSQVGSMSSFPDSASMVSNQSRSSTPSHTF) are compositionally biased toward polar residues. Over residues 358-370 (RHSKAHARKRKKR) the composition is skewed to basic residues. Residues 371-381 (VVDLRRPKTTD) show a composition bias toward basic and acidic residues. Polar residues-rich tracts occupy residues 387-401 (SDES…TPSI) and 498-511 (ATGS…QLPS).

Belongs to the MDM34 family. In terms of assembly, component of the ER-mitochondria encounter structure (ERMES) or MDM complex, composed of mmm1, mdm10, mdm12 and mdm34.

It is found in the mitochondrion outer membrane. In terms of biological role, component of the ERMES/MDM complex, which serves as a molecular tether to connect the endoplasmic reticulum (ER) and mitochondria. Components of this complex are involved in the control of mitochondrial shape and protein biogenesis, and function in nonvesicular lipid trafficking between the ER and mitochondria. Mdm34 is required for the interaction of the ER-resident membrane protein mmm1 and the outer mitochondrial membrane-resident beta-barrel protein mdm10. The chain is Mitochondrial distribution and morphology protein 34 from Neosartorya fischeri (strain ATCC 1020 / DSM 3700 / CBS 544.65 / FGSC A1164 / JCM 1740 / NRRL 181 / WB 181) (Aspergillus fischerianus).